Reading from the N-terminus, the 680-residue chain is Nodulation protein NolNO (680 aa).

The protein belongs to the NodU/CmcH family.

The protein localises to the cytoplasm. Involved in the O-carbamoylation of nod factors. This chain is Nodulation protein NolNO (nolO), found in Sinorhizobium fredii (strain NBRC 101917 / NGR234).